Reading from the N-terminus, the 148-residue chain is Large ribosomal subunit protein bL9 (148 aa).

Belongs to the bacterial ribosomal protein bL9 family.

Binds to the 23S rRNA. This chain is Large ribosomal subunit protein bL9, found in Streptomyces griseus subsp. griseus (strain JCM 4626 / CBS 651.72 / NBRC 13350 / KCC S-0626 / ISP 5235).